A 426-amino-acid polypeptide reads, in one-letter code: 3-phosphoshikimate 1-carboxyvinyltransferase (426 aa).

Residues Lys-21, Ser-22, and Arg-26 each coordinate 3-phosphoshikimate. Lys-21 serves as a coordination point for phosphoenolpyruvate. Phosphoenolpyruvate-binding residues include Gly-92 and Arg-122. Ser-167, Ser-168, Gln-169, Ser-195, Asp-315, and Lys-342 together coordinate 3-phosphoshikimate. Gln-169 serves as a coordination point for phosphoenolpyruvate. Asp-315 serves as the catalytic Proton acceptor. Phosphoenolpyruvate-binding residues include Arg-346 and Arg-386.

Belongs to the EPSP synthase family. In terms of assembly, monomer.

It localises to the cytoplasm. The enzyme catalyses 3-phosphoshikimate + phosphoenolpyruvate = 5-O-(1-carboxyvinyl)-3-phosphoshikimate + phosphate. Its pathway is metabolic intermediate biosynthesis; chorismate biosynthesis. Its function is as follows. Catalyzes the transfer of the enolpyruvyl moiety of phosphoenolpyruvate (PEP) to the 5-hydroxyl of shikimate-3-phosphate (S3P) to produce enolpyruvyl shikimate-3-phosphate and inorganic phosphate. This chain is 3-phosphoshikimate 1-carboxyvinyltransferase, found in Methanosphaera stadtmanae (strain ATCC 43021 / DSM 3091 / JCM 11832 / MCB-3).